Reading from the N-terminus, the 416-residue chain is UDP-N-acetylglucosamine 1-carboxyvinyltransferase (416 aa).

22 to 23 (KN) lines the phosphoenolpyruvate pocket. UDP-N-acetyl-alpha-D-glucosamine is bound at residue arginine 92. The active-site Proton donor is the cysteine 116. 2-(S-cysteinyl)pyruvic acid O-phosphothioketal is present on cysteine 116. UDP-N-acetyl-alpha-D-glucosamine-binding positions include 121-125 (RPVDQ), aspartate 304, and isoleucine 326.

Belongs to the EPSP synthase family. MurA subfamily.

The protein localises to the cytoplasm. The enzyme catalyses phosphoenolpyruvate + UDP-N-acetyl-alpha-D-glucosamine = UDP-N-acetyl-3-O-(1-carboxyvinyl)-alpha-D-glucosamine + phosphate. It participates in cell wall biogenesis; peptidoglycan biosynthesis. Functionally, cell wall formation. Adds enolpyruvyl to UDP-N-acetylglucosamine. This is UDP-N-acetylglucosamine 1-carboxyvinyltransferase from Cupriavidus pinatubonensis (strain JMP 134 / LMG 1197) (Cupriavidus necator (strain JMP 134)).